Reading from the N-terminus, the 156-residue chain is Small ribosomal subunit protein uS7 (156 aa).

The protein belongs to the universal ribosomal protein uS7 family. As to quaternary structure, part of the 30S ribosomal subunit. Contacts proteins S9 and S11.

In terms of biological role, one of the primary rRNA binding proteins, it binds directly to 16S rRNA where it nucleates assembly of the head domain of the 30S subunit. Is located at the subunit interface close to the decoding center, probably blocks exit of the E-site tRNA. The polypeptide is Small ribosomal subunit protein uS7 (Desulfitobacterium hafniense (strain DSM 10664 / DCB-2)).